The chain runs to 810 residues: Transitional endoplasmic reticulum ATPase homolog 2 (810 aa).

ATP-binding positions include 252-258, N353, H389, and 526-531; these read PGTGKTL and GCGKTL. Basic and acidic residues predominate over residues 713–727; that stretch reads RQEKERQDRSARGEE. Disordered regions lie at residues 713–732 and 777–810; these read RQEKERQDRSARGEELMEDE and FGNNFKFPGEAPSAGQPVGGNGGSGGNDDDDLYN. The segment covering 793-802 has biased composition (gly residues); the sequence is PVGGNGGSGG. Positions 805–810 are interaction with ufd-2; that stretch reads DDDLYN.

It belongs to the AAA ATPase family. CDC48 subfamily. As to quaternary structure, homohexamer; oligomerization is ATP-independent. Forms a ring-shaped particle of 18.3 nm diameter, that displays 6-fold radial symmetry. Interacts with cdc-48.1 and thus may form heterohexamers. Forms a complex composed of ubxn-3, cdc-48.1 and/or cdc-48.2 and substrate cdt-1. Interacts (via N-terminus) with ubxn-3. Interacts (via N-terminus) with atx-3 (via RRDR motif). Interacts (via N-terminus) with ubxn-5. Interacts with ufd-1. Interacts (via DDDLYN motif) with ufd-2. Interacts (via N-terminus) with ubxn-1. Interacts (via N-terminus) with ubxn-2. Interacts (via N-terminus) with ubxn-4. Interacts with ubxn-6. In terms of tissue distribution, expressed in body wall muscles.

The protein resides in the cytoplasm. The enzyme catalyses ATP + H2O = ADP + phosphate + H(+). The first ATP-binding region has low ATPase activity. The second ATP-binding region is responsible for ATPase activity. ATP binding to the first ATP-binding region induces intrinsic activity of the second ATP-binding region. While ATP binding to the first ATP-binding region appears to prevent ATP hydrolysis by the second ATP-binding region, ADP-binding to first region promotes the coordinate and cooperative ATPase cycle of the second ATP-binding region. ATP binding to the first ATP-binding region induces a conformational change, promoting the rotation of the first ATP-binding region relative to the second ATP-binding region in the hexamer. Inhibited by N-ethylmaleimide (NEM). ATP-dependent chaperone which probably uses the energy provided by ATP hydrolysis to generate mechanical force to unfold substrate proteins, disassemble protein complexes, and disaggregate protein aggregates. However, able to prevent aggregation of unfolded proteins also in an ATP-independent manner. Targets polyubiquitinated proteins for proteasomal degradation by binding to 'Lys-48'-linked polyubiquitin chains. Involved in the cytoplasmic elimination of misfolded proteins exported from the ER. This pathway, known as ERAD, prevents the activation of the unfolded protein response (UPR) caused by the accumulation of misfolded proteins in the ER. Together with udf-2 and chn-1, regulates myosin assembly in body wall muscles by targeting myosin chaperone unc-45 for proteasomal degradation. During oocyte meiosis and together with cdc-48.1, required for chromosome condensation at the diakinesis phase in prophase I and for progression of metaphase I. During the first embryonic cell division, regulates DNA replication and thus chromosome segregation and decondensation, and nuclear envelope re-assembly. In S phase and in association with ufd-1, npl-4.1 and/or npl-4.2 and ubxn-3, ensures the degradation of DNA licensing factor cdt-1 after the initiation of DNA replication and thus the disassembly of the DNA replication CMG helicase complex by promoting the dissociation from chromatin of several of its components including cdc-45 and sld-5. Regulates ubxn-3 nuclear localization during S phase. During the first embryonic cell divisions and together with cdc-48.1, regulates the re-assembly of the nuclear envelope after mitosis possibly by inactivating kinase air-2, a component of the chromosomal passenger complex (CPC). This chain is Transitional endoplasmic reticulum ATPase homolog 2 (cdc-48.2), found in Caenorhabditis elegans.